We begin with the raw amino-acid sequence, 468 residues long: Alcohol dehydrogenase (quinone), cytochrome c subunit (468 aa).

A signal peptide spans 1–23; sequence MINRLKVTFSAAAFSLLAGTALA. Cytochrome c domains are found at residues 31 to 134, 178 to 293, and 317 to 407; these read ALVQ…MHGV, PEIA…KSLP, and TASV…RTSW. Residues Cys-45, Cys-48, His-49, Cys-193, Cys-196, His-197, Cys-330, Cys-333, and His-334 each coordinate heme c.

In terms of assembly, the alcohol dehydrogenase multicomponent enzyme system is composed of a dehydrogenase subunit I (AdhA) and a cytochrome c subunit II (AdhB). It depends on heme c as a cofactor.

The protein resides in the cell membrane. The catalysed reaction is ethanol + a ubiquinone = a ubiquinol + acetaldehyde. Functionally, cytochrome c component of the alcohol dehydrogenase multicomponent enzyme system which is involved in the production of acetic acid and in the ethanol oxidase respiratory chain. Quinohemoprotein alcohol dehydrogenase (ADH) catalyzes the oxidation of ethanol to acetaldehyde by transferring electrons to the ubiquinone embedded in the membrane phospholipids. The electrons transfer from ethanol to membranous ubiquinone occurs from pyrroloquinoline quinone (PQQ) to one heme c in subunit I (AdhA), and finally to two heme c in subunit II (AdhB). Besides ubiquinone reduction, ADH also has a ubiquinol (QH2) oxidation reaction which mediates electron transfer from ubiquinol to the non-energy generating bypass oxidase system. The electrons transfer occurs from ubiquinol (QH2) to the additional heme c within subunit II (AdhB). The sequence is that of Alcohol dehydrogenase (quinone), cytochrome c subunit from Gluconacetobacter polyoxogenes (Acetobacter polyoxogenes).